A 145-amino-acid polypeptide reads, in one-letter code: Transcriptional regulator MraZ (145 aa).

SpoVT-AbrB domains follow at residues 5–47 (EHQH…PLPE) and 76–119 (AVEC…AKDQ).

The protein belongs to the MraZ family. In terms of assembly, forms oligomers.

The protein localises to the cytoplasm. It is found in the nucleoid. The sequence is that of Transcriptional regulator MraZ from Pelotomaculum thermopropionicum (strain DSM 13744 / JCM 10971 / SI).